A 140-amino-acid chain; its full sequence is MPGLFSANNLIKSRKAKRLADTAYRKRALGTKYKHSVLGRAPQAKAIVLEKIGVEAKQPNSAIRKAVRCQLIATGKKITAFVPYDGSVTYIESNDEVTVEGFGKKGRSVGDIPGIRFKVCKVQNVSLHAIFTGKKEKPSR.

Proline 59 carries the hydroxyproline modification.

It belongs to the universal ribosomal protein uS12 family.

The polypeptide is Small ribosomal subunit protein uS12 (RPS23) (Encephalitozoon cuniculi (strain GB-M1) (Microsporidian parasite)).